The primary structure comprises 176 residues: 2-oxo-4-hydroxy-4-carboxy-5-ureidoimidazoline decarboxylase (176 aa).

The Proton donor; for OHCU decarboxylase activity role is filled by His70. Residues Pro71, 83 to 87 (SQEEQ), and 118 to 122 (FIMAV) contribute to the substrate site. Positions 72–96 (DLGERTEMTDESQEEQASAGLDRLP) are disordered.

The protein belongs to the OHCU decarboxylase family.

It carries out the reaction 5-hydroxy-2-oxo-4-ureido-2,5-dihydro-1H-imidazole-5-carboxylate + H(+) = (S)-allantoin + CO2. It functions in the pathway purine metabolism; urate degradation; (S)-allantoin from urate: step 3/3. In terms of biological role, catalyzes the stereoselective decarboxylation of 2-oxo-4-hydroxy-4-carboxy-5-ureidoimidazoline (OHCU) to (S)-allantoin. The chain is 2-oxo-4-hydroxy-4-carboxy-5-ureidoimidazoline decarboxylase from Halalkalicoccus jeotgali (strain DSM 18796 / CECT 7217 / JCM 14584 / KCTC 4019 / B3).